The primary structure comprises 319 residues: Acetyl-coenzyme A carboxylase carboxyl transferase subunit alpha (319 aa).

The region spanning 31–292 is the CoA carboxyltransferase C-terminal domain; the sequence is EIDSAIRSLR…KTYLSRQLSE (262 aa).

This sequence belongs to the AccA family. As to quaternary structure, acetyl-CoA carboxylase is a heterohexamer composed of biotin carboxyl carrier protein (AccB), biotin carboxylase (AccC) and two subunits each of ACCase subunit alpha (AccA) and ACCase subunit beta (AccD).

It is found in the cytoplasm. It catalyses the reaction N(6)-carboxybiotinyl-L-lysyl-[protein] + acetyl-CoA = N(6)-biotinyl-L-lysyl-[protein] + malonyl-CoA. It functions in the pathway lipid metabolism; malonyl-CoA biosynthesis; malonyl-CoA from acetyl-CoA: step 1/1. Functionally, component of the acetyl coenzyme A carboxylase (ACC) complex. First, biotin carboxylase catalyzes the carboxylation of biotin on its carrier protein (BCCP) and then the CO(2) group is transferred by the carboxyltransferase to acetyl-CoA to form malonyl-CoA. This chain is Acetyl-coenzyme A carboxylase carboxyl transferase subunit alpha, found in Rhodopirellula baltica (strain DSM 10527 / NCIMB 13988 / SH1).